A 433-amino-acid chain; its full sequence is GTPase Der (433 aa).

EngA-type G domains follow at residues 5-167 (KKVL…GEVG) and 174-349 (IKVG…DQLE). GTP-binding positions include 11–18 (GRPNVGKS), 58–62 (DTGGF), 119–122 (NKVD), 180–187 (GKPNSGKS), 227–231 (DTAGI), and 292–295 (SKWD). A KH-like domain is found at 349-429 (ELKTSTPDLN…PILVELKEKI (81 aa)).

The protein belongs to the TRAFAC class TrmE-Era-EngA-EngB-Septin-like GTPase superfamily. EngA (Der) GTPase family. Associates with the 50S ribosomal subunit.

Functionally, GTPase that plays an essential role in the late steps of ribosome biogenesis. The protein is GTPase Der of Borreliella burgdorferi (strain ATCC 35210 / DSM 4680 / CIP 102532 / B31) (Borrelia burgdorferi).